A 228-amino-acid chain; its full sequence is R-spondin-4 (228 aa).

Positions 1 to 19 are cleaved as a signal peptide; that stretch reads MRAPLCLLLLLAHAVDMLA. Residue N34 is glycosylated (N-linked (GlcNAc...) asparagine). Intrachain disulfides connect C35-C41, C38-C47, C50-C69, C73-C88, C91-C98, C95-C104, C107-C118, C122-C135, C139-C181, C150-C157, and C190-C196. Residues 85-128 form an FU repeat; it reads ANRCKKCGATCESCFSQDFCIRCKRRFHLYKGKCLPSCPPGTLT. In terms of domain architecture, TSP type-1 spans 138–197; the sequence is ECEPSPWGSWSPCIHNGKTCGSGWGLETRVREAGPAKQEETASCRVLSESRKCPIKRLCP. Residues 193–228 are disordered; sequence KRLCPGERNPRQKNRKDRRQRKDRKLERRPHQRGSQ. The span at 203–228 shows a compositional bias: basic residues; sequence RQKNRKDRRQRKDRKLERRPHQRGSQ.

Belongs to the R-spondin family. As to quaternary structure, binds heparin. Interacts with LGR4, LGR5 and LGR6.

Its subcellular location is the secreted. Its function is as follows. Activator of the canonical Wnt signaling pathway by acting as a ligand for LGR4-6 receptors. Upon binding to LGR4-6 (LGR4, LGR5 or LGR6), LGR4-6 associate with phosphorylated LRP6 and frizzled receptors that are activated by extracellular Wnt receptors, triggering the canonical Wnt signaling pathway to increase expression of target genes. Also regulates the canonical Wnt/beta-catenin-dependent pathway and non-canonical Wnt signaling by acting as an inhibitor of ZNRF3, an important regulator of the Wnt signaling pathway. The chain is R-spondin-4 (Rspo4) from Mus musculus (Mouse).